The sequence spans 109 residues: Death-associated protein-like 1 homolog (109 aa).

Disordered regions lie at residues 1 to 51 and 76 to 100; these read MVQL…KPRS and FPETPVSVRHSRVRPSVEKPHISRI. Residues 31–50 are compositionally biased toward basic and acidic residues; that stretch reads KSADENANVEKETRKTDKPR.

It belongs to the DAP-DAPL1 family. In terms of assembly, associates with ribosomes; preventing translation. Interacts with eiF5a (eif5a and eif5a2); preventing translation.

Its function is as follows. Ribosome-binding protein that promotes ribosome hibernation, a process during which ribosomes are stabilized in an inactive state and preserved from proteasomal degradation. Acts via its association with eiF5a (eif5a and eif5a2) at the polypeptide exit tunnel of the ribosome, preventing mRNA translation. Plays a key role in ribosome hibernation in the mature egg by preventing mRNA translation, leading to ribosome inactivation. Ribosomes, which are produced in large quantities during oogenesis, are stored and translationally repressed in the egg and early embryo. The sequence is that of Death-associated protein-like 1 homolog from Danio rerio (Zebrafish).